The chain runs to 138 residues: Glutaredoxin-C7 (138 aa).

Positions 17 to 40 (SSTRGGGGGGMLGLTLFDPPGGEQ) are disordered. Residues 42–137 (AERIGRLVRE…PRLREVGALC (96 aa)) form the Glutaredoxin domain. Cys-62 and Cys-65 are joined by a disulfide.

This sequence belongs to the glutaredoxin family. CC-type subfamily.

The protein localises to the cytoplasm. Has a glutathione-disulfide oxidoreductase activity in the presence of NADPH and glutathione reductase. Reduces low molecular weight disulfides and proteins. This is Glutaredoxin-C7 (GRXC7) from Oryza sativa subsp. japonica (Rice).